We begin with the raw amino-acid sequence, 564 residues long: Dihydroxy-acid dehydratase (564 aa).

Residue C51 coordinates [2Fe-2S] cluster. D83 provides a ligand contact to Mg(2+). Residue C124 participates in [2Fe-2S] cluster binding. The Mg(2+) site is built by D125 and K126. Residue K126 is modified to N6-carboxylysine. C196 serves as a coordination point for [2Fe-2S] cluster. Mg(2+) is bound at residue E448. The active-site Proton acceptor is S474.

This sequence belongs to the IlvD/Edd family. Homodimer. It depends on [2Fe-2S] cluster as a cofactor. Mg(2+) serves as cofactor.

It catalyses the reaction (2R)-2,3-dihydroxy-3-methylbutanoate = 3-methyl-2-oxobutanoate + H2O. The enzyme catalyses (2R,3R)-2,3-dihydroxy-3-methylpentanoate = (S)-3-methyl-2-oxopentanoate + H2O. It functions in the pathway amino-acid biosynthesis; L-isoleucine biosynthesis; L-isoleucine from 2-oxobutanoate: step 3/4. The protein operates within amino-acid biosynthesis; L-valine biosynthesis; L-valine from pyruvate: step 3/4. In terms of biological role, functions in the biosynthesis of branched-chain amino acids. Catalyzes the dehydration of (2R,3R)-2,3-dihydroxy-3-methylpentanoate (2,3-dihydroxy-3-methylvalerate) into 2-oxo-3-methylpentanoate (2-oxo-3-methylvalerate) and of (2R)-2,3-dihydroxy-3-methylbutanoate (2,3-dihydroxyisovalerate) into 2-oxo-3-methylbutanoate (2-oxoisovalerate), the penultimate precursor to L-isoleucine and L-valine, respectively. The protein is Dihydroxy-acid dehydratase of Polynucleobacter asymbioticus (strain DSM 18221 / CIP 109841 / QLW-P1DMWA-1) (Polynucleobacter necessarius subsp. asymbioticus).